The following is a 260-amino-acid chain: MEIDLNADLGEGYGPWRMGDDEAMMSLISSANIACGFHAGDPLIMDRTVRLAIEGGVDVGAHVGFPDRQGFGRRFMQVDIPDLTAMVTYQLGALAGIARAHGRRVTHMSFHGALGNRAAADPAWATPLLKAIAAFDPNLIISTSSSQAIEGAAAAFGLPVGVSFLADRAYDDQGLLVSRGLPGAVIHDEAQVLARVRRLLTEGTIVTHAGNVLPMQPRSILVHGDTPGAVALTQRLRAEIESLGGRIVPISQQLGFSTVP.

It belongs to the LamB/PxpA family. As to quaternary structure, forms a complex composed of PxpA, PxpB and PxpC.

The enzyme catalyses 5-oxo-L-proline + ATP + 2 H2O = L-glutamate + ADP + phosphate + H(+). Its function is as follows. Catalyzes the cleavage of 5-oxoproline to form L-glutamate coupled to the hydrolysis of ATP to ADP and inorganic phosphate. The sequence is that of 5-oxoprolinase subunit A 2 from Ralstonia nicotianae (strain ATCC BAA-1114 / GMI1000) (Ralstonia solanacearum).